Consider the following 469-residue polypeptide: MSTESEISVRIRGIYSTALTKLFLDKGFKIVQPSDVIAERLGIEKSYEDFDVDIYDRNHGITIVGTKVEEVRKALEEELVDVFFRKLPYKLYGVYKGIVVKRDDRYVYVDIGNAIGTVLVEELPDAVEGDEVVVQVKKHNVLPHLSIMITIPGDYAVLIPKPIGVQRHVKISRKIRDPEERERLRILGLSVNLGEWGILWRTAAAYKEWSLLRDELVRLSKIADKLKEADKYSAPAEIIEGRSIYEVEFGGGAKKKLDEIRNRVVPTIEGHHQYKSYDPEFTLAVEVAEGILAKMPSQRQKISEGFVEAITNSKGPRVGWIFTLNHVKPDGQVIKIGPGEVIEVSSRPLRVKIRRNLRPGRVYDGLEVPIEPGDYAITEIEAGKWWFVHRYYDRNGNLKGEFYNINTPVEIYPDKARYVDLEVDIVKWPDGKKEIIDKEKLKEHYEDGIISEKLYKAVLRIVQEVYERV.

This sequence belongs to the FAU-1 family.

Functionally, probable RNase involved in rRNA stability through maturation and/or degradation of precursor rRNAs. Binds to RNA in loop regions with AU-rich sequences. This Pyrococcus abyssi (strain GE5 / Orsay) protein is Probable ribonuclease FAU-1.